Here is a 260-residue protein sequence, read N- to C-terminus: Hemin import ATP-binding protein HmuV (260 aa).

Positions 7 to 243 constitute an ABC transporter domain; that stretch reads IQASNISVTF…ERIEQVYGYS (237 aa). An ATP-binding site is contributed by 39-46; the sequence is GPNGAGKS.

The protein belongs to the ABC transporter superfamily. Heme (hemin) importer (TC 3.A.1.14.5) family. The complex is composed of two ATP-binding proteins (HmuV), two transmembrane proteins (HmuU) and a solute-binding protein (HmuT).

It is found in the cell inner membrane. In terms of biological role, part of the ABC transporter complex HmuTUV involved in hemin import. Responsible for energy coupling to the transport system. This Vibrio anguillarum (strain ATCC 68554 / 775) (Listonella anguillarum) protein is Hemin import ATP-binding protein HmuV.